The sequence spans 282 residues: Probable protein phosphatase 2C 45 (282 aa).

Positions 27–272 constitute a PPM-type phosphatase domain; the sequence is SYGYASSPGK…DNITCVVVRF (246 aa). Mn(2+) is bound by residues D63, G64, D224, and D263.

Belongs to the PP2C family. It depends on Mg(2+) as a cofactor. Mn(2+) serves as cofactor.

The catalysed reaction is O-phospho-L-seryl-[protein] + H2O = L-seryl-[protein] + phosphate. It catalyses the reaction O-phospho-L-threonyl-[protein] + H2O = L-threonyl-[protein] + phosphate. The chain is Probable protein phosphatase 2C 45 from Oryza sativa subsp. japonica (Rice).